We begin with the raw amino-acid sequence, 65 residues long: Large ribosomal subunit protein bL35 (65 aa).

It belongs to the bacterial ribosomal protein bL35 family.

This is Large ribosomal subunit protein bL35 from Thermotoga maritima (strain ATCC 43589 / DSM 3109 / JCM 10099 / NBRC 100826 / MSB8).